Consider the following 872-residue polypeptide: Coatomer subunit gamma-2 (872 aa).

6 HEAT repeats span residues 64-101, 283-320, 321-355, 356-392, 395-430, and 467-504; these read MEAT…ISED, RELA…KHPS, AVTA…GSES, SVDR…KYPR, SVMM…ENPD, and PTPS…QNEP.

It belongs to the COPG family. In terms of assembly, oligomeric complex.

Its subcellular location is the cytoplasm. The protein resides in the golgi apparatus membrane. The protein localises to the cytoplasmic vesicle. It localises to the COPI-coated vesicle membrane. Functionally, the coatomer is a cytosolic protein complex that binds to dilysine motifs and reversibly associates with Golgi non-clathrin-coated vesicles, which further mediate biosynthetic protein transport from the ER, via the Golgi up to the trans Golgi network. Coatomer complex is required for budding from Golgi membranes, and is essential for the retrograde Golgi-to-ER transport of dilysine-tagged proteins. The chain is Coatomer subunit gamma-2 (copg2) from Xenopus tropicalis (Western clawed frog).